We begin with the raw amino-acid sequence, 881 residues long: MRNVLRLLFLTAFVAIGSLAAVLGVDYGQQNIKAIVVSPQAPLELVLTPEAKRKEISGLSIKRLPGYGKDDPNGIERIYGSAVGSLATRFPQNTLLHLKPLLGKSLEDETTVTLYSKQHPGLEMVSTNRSTIAFLVDNVEYPLEELVAMNVQEIANRANSLLKDRDARTEDFVNKMSFTIPDFFDQHQRKALLDASSITTGIEETYLVSEGMSVAVNFVLKQRQFPPGEQQHYIVYDMGSGSIKASMFSILQPEDTTQPVTIEFEGYGYNPHLGGAKFTMDIGSLIENKFLETHPAIRTDELHANPKALAKINQAAEKAKLILSANSEASINIESLINDIDFRTSITRQEFEEFIADSLLDIVKPINDAVTKQFGGYGTNLPEINGVILAGGSSRIPIVQDQLIKLVSEEKVLRNVNADESAVNGVVMRGIKLSNSFKTKPLNVVDRSVNTYSFKLSNESELYDVFTRGSAYPNKTSILTNTTDSIPNNFTIDLFENGKLFETITVNSGAIKNSYSSDKCSSGVAYNITFDLSSDRLFSIQEVNCICQSENDIGNSKQIKNKGSRLAFTSEDVEIKRLSPSERSRLHEHIKLLDKQDKERFQFQENLNVLESNLYDARNLLMDDEVMQNGPKSQVEELSEMVKVYLDWLEDASFDTDPEDIVSRIREIGILKKKIELYMDSAKEPLNSQQFKGMLEEGHKLLQAIETHKNTVEEFLSQFETEFADTIDNVREEFKKIKQPAYVSKALSTWEETLTSFKNSISEIEKFLAKNLFGEDLREHLFEIKLQFDMYRTKLEEKLRLIKSGDESRLNEIKKLHLRNFRLQKRKEEKLKRKLEQEKSRNNNETESTVINSADDKTTIVNDKTTESNPSSEEDILHDEL.

An N-terminal signal peptide occupies residues 1-20 (MRNVLRLLFLTAFVAIGSLA). N-linked (GlcNAc...) asparagine glycosylation is found at Asn128, Asn458, Asn474, Asn481, Asn489, Asn527, and Asn844. Positions 833 to 844 (RKLEQEKSRNNN) are enriched in basic and acidic residues. Positions 833-881 (RKLEQEKSRNNNETESTVINSADDKTTIVNDKTTESNPSSEEDILHDEL) are disordered. Over residues 859–871 (TIVNDKTTESNPS) the composition is skewed to polar residues. A compositionally biased stretch (acidic residues) spans 872–881 (SEEDILHDEL). The Prevents secretion from ER motif lies at 878–881 (HDEL).

It belongs to the heat shock protein 70 family. Interacts with the heat shock protein 70 (HSP70) KAR2, and this stimulates nucleotide exchange on KAR2. KAR2 in turn acts to stimulate the ATPase activity of LHS1. Post-translationally, N-glycosylated.

It is found in the endoplasmic reticulum lumen. The enzyme catalyses ATP + H2O = ADP + phosphate + H(+). Functionally, chaperone required for protein translocation and folding in the endoplasmic reticulum. This Saccharomyces cerevisiae (strain ATCC 204508 / S288c) (Baker's yeast) protein is Heat shock protein 70 homolog LHS1 (LHS1).